Reading from the N-terminus, the 411-residue chain is F-box/kelch-repeat protein At3g61590 (411 aa).

The F-box domain maps to Phe-37–Phe-83. Kelch repeat units lie at residues Cys-81–Gly-135, Val-137–Ser-178, Ser-196–Asn-246, Met-251–Leu-299, Arg-302–Glu-350, and Phe-352–Phe-401.

Part of a SCF (ASK-cullin-F-box) protein ligase complex. Interacts with SKP1A/ASK1, SKP1B/ASK2, ASK3, ASK9, ASK11, ASK12, ASK13, ASK14, ASK16 and ASK18.

It functions in the pathway protein modification; protein ubiquitination. Its function is as follows. Component of SCF(ASK-cullin-F-box) E3 ubiquitin ligase complexes, which may mediate the ubiquitination and subsequent proteasomal degradation of target proteins. This chain is F-box/kelch-repeat protein At3g61590, found in Arabidopsis thaliana (Mouse-ear cress).